A 295-amino-acid polypeptide reads, in one-letter code: Peptide transport system permease protein SapC (295 aa).

A run of 6 helical transmembrane segments spans residues 27 to 47 (IALF…FASY), 102 to 122 (LLVV…AGLL), 129 to 149 (FVGH…AVVI), 157 to 177 (LWNA…HTIY), 219 to 239 (VARA…ISLG), and 262 to 282 (PWTV…SIIF). The ABC transmembrane type-1 domain maps to 98-278 (LGSALLVVFS…GFAIIFTILL (181 aa)).

The protein belongs to the binding-protein-dependent transport system permease family. OppBC subfamily.

It is found in the cell inner membrane. Its function is as follows. Involved in a peptide intake transport system that plays a role in the resistance to antimicrobial peptides. The sequence is that of Peptide transport system permease protein SapC (sapC) from Haemophilus influenzae (strain ATCC 51907 / DSM 11121 / KW20 / Rd).